We begin with the raw amino-acid sequence, 498 residues long: Phenylalanine--tRNA ligase alpha subunit (498 aa).

L-phenylalanine-binding positions include Thr-328, 372-374 (QVE), and Tyr-412. Residue Glu-414 participates in Mg(2+) binding. Phe-438 is a binding site for L-phenylalanine.

This sequence belongs to the class-II aminoacyl-tRNA synthetase family. Phe-tRNA synthetase alpha subunit type 2 subfamily. In terms of assembly, tetramer of two alpha and two beta subunits. Requires Mg(2+) as cofactor.

Its subcellular location is the cytoplasm. The catalysed reaction is tRNA(Phe) + L-phenylalanine + ATP = L-phenylalanyl-tRNA(Phe) + AMP + diphosphate + H(+). The polypeptide is Phenylalanine--tRNA ligase alpha subunit (Drosophila melanogaster (Fruit fly)).